Reading from the N-terminus, the 1518-residue chain is Probable serine/threonine-protein kinase HSL1 (1518 aa).

Disordered stretches follow at residues 1 to 43 and 55 to 83; these read MTGH…GHLE and RLSQ…PWKL. Polar residues predominate over residues 55 to 68; the sequence is RLSQPDSTVSVATK. The Protein kinase domain occupies 81–369; the sequence is WKLGKTLGKG…TQEILKHPLI (289 aa). Residues 87–95 and Lys110 each bind ATP; that span reads LGKGSSGRV. Residue Asp239 is the Proton acceptor of the active site. The tract at residues 467–502 is disordered; sequence LSSSSENKKSATESSVNEPRIEYASKTANNTGLRSE. Residues 492 to 501 are compositionally biased toward polar residues; sequence KTANNTGLRS. Phosphoserine is present on Ser511. A compositionally biased stretch (low complexity) spans 599 to 611; the sequence is SNSRLSLSASTSR. Residues 599-651 form a disordered region; sequence SNSRLSLSASTSRETVHDNEMPLPQLPKSPSRYSLSRRAIHASPSTKSIHKSL. Phosphoserine is present on residues Ser629 and Ser685. Positions 741–783 are disordered; the sequence is EEEDNEKERDTQRQRQNDTKSSADTFTISGVSTNKENEGPEYP. The segment covering 746-758 has biased composition (basic and acidic residues); it reads EKERDTQRQRQND. A compositionally biased stretch (polar residues) spans 759-774; sequence TKSSADTFTISGVSTN. Phosphoserine occurs at positions 837 and 866. A compositionally biased stretch (basic and acidic residues) spans 856 to 876; sequence EQLQKKNDRPSPLKPIQHQEL. Disordered regions lie at residues 856-898, 1005-1030, 1150-1170, and 1220-1243; these read EQLQ…RRNI, DDKH…KQSA, APSD…RASV, and SPEN…RDSN. Ser1220 carries the post-translational modification Phosphoserine. Over residues 1222-1243 the composition is skewed to polar residues; that stretch reads ENPSNTHMQKRFSSTRGSRDSN. The residue at position 1250 (Ser1250) is a Phosphoserine. The interval 1259-1291 is disordered; sequence EEDQDGHTSQADILESSMSYSKRRPSEESVNPK. Over residues 1265–1278 the composition is skewed to polar residues; the sequence is HTSQADILESSMSY. 3 positions are modified to phosphoserine: Ser1284, Ser1287, and Ser1325.

It belongs to the protein kinase superfamily. CAMK Ser/Thr protein kinase family. NIM1 subfamily.

It localises to the bud neck. The enzyme catalyses L-seryl-[protein] + ATP = O-phospho-L-seryl-[protein] + ADP + H(+). The catalysed reaction is L-threonyl-[protein] + ATP = O-phospho-L-threonyl-[protein] + ADP + H(+). The polypeptide is Probable serine/threonine-protein kinase HSL1 (HSL1) (Saccharomyces cerevisiae (strain ATCC 204508 / S288c) (Baker's yeast)).